A 178-amino-acid polypeptide reads, in one-letter code: MLRTFVTSALRSVCRQSPAASSLVPLVQRTQRATLMTLSRPCLLPTPSLASPAHHQLLQLPGVLAATGTPSNTRNVTKFSLVKGKRKTVKAVLKRFKRLDWGAWIRTHSGRQKKLFKKSAALRRRLKQHVFTNATQSWLLDKMVTSYWRRPKHFINDPYKPYHSRNEYYATQSKTFKV.

This sequence belongs to the bacterial ribosomal protein bL35 family.

It is found in the mitochondrion. The chain is Large ribosomal subunit protein bL35m (mRpL35) from Drosophila melanogaster (Fruit fly).